The primary structure comprises 102 residues: Large ribosomal subunit protein uL24 (102 aa).

This sequence belongs to the universal ribosomal protein uL24 family. Part of the 50S ribosomal subunit.

In terms of biological role, one of two assembly initiator proteins, it binds directly to the 5'-end of the 23S rRNA, where it nucleates assembly of the 50S subunit. One of the proteins that surrounds the polypeptide exit tunnel on the outside of the subunit. This chain is Large ribosomal subunit protein uL24, found in Burkholderia mallei (strain NCTC 10229).